The sequence spans 368 residues: tRNA-specific 2-thiouridylase MnmA (368 aa).

ATP contacts are provided by residues 11 to 18 (GMSGGVDS) and Met37. The segment at 97 to 99 (NPD) is interaction with target base in tRNA. The active-site Nucleophile is Cys102. A disulfide bridge links Cys102 with Cys199. Residue Gly127 participates in ATP binding. The interval 149 to 151 (KDQ) is interaction with tRNA. Cys199 acts as the Cysteine persulfide intermediate in catalysis. The interval 311–312 (RY) is interaction with tRNA.

Belongs to the MnmA/TRMU family. In terms of assembly, interacts with TusE.

Its subcellular location is the cytoplasm. It carries out the reaction S-sulfanyl-L-cysteinyl-[protein] + uridine(34) in tRNA + AH2 + ATP = 2-thiouridine(34) in tRNA + L-cysteinyl-[protein] + A + AMP + diphosphate + H(+). Catalyzes the 2-thiolation of uridine at the wobble position (U34) of tRNA(Lys), tRNA(Glu) and tRNA(Gln), leading to the formation of s(2)U34, the first step of tRNA-mnm(5)s(2)U34 synthesis. Sulfur is provided by IscS, via a sulfur-relay system. Binds ATP and its substrate tRNAs. This chain is tRNA-specific 2-thiouridylase MnmA, found in Salmonella paratyphi B (strain ATCC BAA-1250 / SPB7).